The primary structure comprises 504 residues: Peroxisome proliferator-activated receptor gamma (504 aa).

A Phosphoserine; by MAPK modification is found at serine 111. A DNA-binding region (nuclear receptor) is located at residues 135–209 (AIECRVCGDK…VGMSHNAIRF (75 aa)). 2 consecutive NR C4-type zinc fingers follow at residues 138–158 (CRVC…CEGC) and 175–197 (CDLN…FQKC). The interval 204–279 (HNAIRFGRMP…DKSPFVIYDM (76 aa)) is interaction with FAM120B. An NR LBD domain is found at 237 to 502 (DLRALAKHLY…HPLLQEIYKD (266 aa)). Lysine 251 participates in a covalent cross-link: Glycyl lysine isopeptide (Lys-Gly) (interchain with G-Cter in ubiquitin). The short motif at 494 to 502 (PLLQEIYKD) is the 9aaTAD element.

Belongs to the nuclear hormone receptor family. NR1 subfamily. Interacts with FOXO1 (acetylated form). Heterodimer with other nuclear receptors, such as RXRA. The heterodimer with the retinoic acid receptor RXRA is called adipocyte-specific transcription factor ARF6. Interacts with NCOA6 coactivator, leading to a strong increase in transcription of target genes. Interacts with coactivator PPARBP, leading to a mild increase in transcription of target genes. Interacts with NOCA7 in a ligand-inducible manner. Interacts with NCOA1 and NCOA2 LXXLL motifs. Interacts with ASXL1, ASXL2, DNTTIP2, FAM120B, MAP2K1/MEK1, NR0B2, PDPK1, PRDM16, PRMT2 and TGFB1I1. Interacts (when activated by agonist) with PPP5C. Interacts with HELZ2 and THRAP3; the interaction stimulates the transcriptional activity of PPARG. Interacts with PER2, the interaction is ligand dependent and blocks PPARG recruitment to target promoters. Interacts with NOCT. Interacts with ACTN4. Interacts (when in the liganded conformation) with GPS2. Interacts with CRY1 and CRY2 in a ligand-dependent manner. In the absence of hormonal ligand, interacts with TACC1. In macrophages, interacts with PAQR3 and STUB1; the interactions promote PPARG poylubiquitination and STUB1-mediated degradation. Post-translationally, phosphorylated at basal conditions and dephosphorylated when treated with the ligand. May be dephosphorylated by PPP5C. The phosphorylated form may be inactive and dephosphorylation induces adipogenic activity. Ubiquitinated by E3 ubiquitin-protein ligase complex containing FBXO9; leading to proteasomal degradation. Ubiquitinated at Lys-251 by TRIM55 leading to proteasomal degradation. Ubiquitinated by E3 ubiquitin-protein ligase STUB1/CHIP; leading to proteasomal degradation. In terms of tissue distribution, highest expression in adipose tissue and lower in spleen. Very low levels in kidney, intestine, lung and muscle.

The protein resides in the nucleus. Its subcellular location is the cytoplasm. With respect to regulation, PDPK1 activates its transcriptional activity independently of its kinase activity. Functionally, nuclear receptor that binds peroxisome proliferators such as hypolipidemic drugs and fatty acids. Once activated by a ligand, the nuclear receptor binds to DNA specific PPAR response elements (PPRE) and modulates the transcription of its target genes, such as acyl-CoA oxidase. It therefore controls the peroxisomal beta-oxidation pathway of fatty acids. Key regulator of adipocyte differentiation and glucose homeostasis. ARF6 acts as a key regulator of the tissue-specific adipocyte P2 (aP2) enhancer. Acts as a critical regulator of gut homeostasis by suppressing NF-kappa-B-mediated pro-inflammatory responses. Plays a role in the regulation of cardiovascular circadian rhythms by regulating the transcription of BMAL1 in the blood vessels. This Sus scrofa (Pig) protein is Peroxisome proliferator-activated receptor gamma (PPARG).